We begin with the raw amino-acid sequence, 281 residues long: 2,3,4,5-tetrahydropyridine-2,6-dicarboxylate N-succinyltransferase (281 aa).

Residues Arg-108 and Asp-145 each coordinate substrate.

It belongs to the transferase hexapeptide repeat family. In terms of assembly, homotrimer.

Its subcellular location is the cytoplasm. The catalysed reaction is (S)-2,3,4,5-tetrahydrodipicolinate + succinyl-CoA + H2O = (S)-2-succinylamino-6-oxoheptanedioate + CoA. It functions in the pathway amino-acid biosynthesis; L-lysine biosynthesis via DAP pathway; LL-2,6-diaminopimelate from (S)-tetrahydrodipicolinate (succinylase route): step 1/3. This Nitrobacter hamburgensis (strain DSM 10229 / NCIMB 13809 / X14) protein is 2,3,4,5-tetrahydropyridine-2,6-dicarboxylate N-succinyltransferase.